The sequence spans 695 residues: Probable Rho-GTPase-activating protein 7 (695 aa).

Positions 1–11 (MLSAPSSSTTP) are enriched in low complexity. The disordered stretch occupies residues 1-26 (MLSAPSSSTTPASPPTSPPNTTSSDD). The 275-residue stretch at 33 to 307 (PKVEAILNSE…ALDNINANTD (275 aa)) folds into the F-BAR domain. The interval 320 to 499 (EDNKNPTDAS…SVSPQPSSPT (180 aa)) is disordered. Composition is skewed to polar residues over residues 336-348 (PPSS…SAGK) and 366-382 (PLQN…NPSV). Composition is skewed to low complexity over residues 383–432 (ASPA…RTSS), 458–467 (PIQTTTIQTS), and 488–499 (PTSVSPQPSSPT). A phosphoserine mark is found at serine 496 and serine 497. A Rho-GAP domain is found at 506 to 692 (ARLDAIILRE…ILIDYCFTIF (187 aa)).

The polypeptide is Probable Rho-GTPase-activating protein 7 (rga7) (Schizosaccharomyces pombe (strain 972 / ATCC 24843) (Fission yeast)).